Consider the following 953-residue polypeptide: UPF0746 protein DDB_G0281301 (953 aa).

The segment covering 1 to 10 (MVNNKRKEIE) has biased composition (basic and acidic residues). Positions 1–23 (MVNNKRKEIENQENDNNDDNDGL) are disordered. Acidic residues predominate over residues 11-21 (NQENDNNDDND). An SAP domain is found at 35-69 (YDSIRSKELQTIAKSLGLPIIGKKQEIYKRIEGYF).

Belongs to the UPF0746 family.

This is UPF0746 protein DDB_G0281301 from Dictyostelium discoideum (Social amoeba).